We begin with the raw amino-acid sequence, 124 residues long: Small ribosomal subunit protein uS12 (124 aa).

Aspartate 89 carries the 3-methylthioaspartic acid modification.

Belongs to the universal ribosomal protein uS12 family. In terms of assembly, part of the 30S ribosomal subunit. Contacts proteins S8 and S17. May interact with IF1 in the 30S initiation complex.

With S4 and S5 plays an important role in translational accuracy. Functionally, interacts with and stabilizes bases of the 16S rRNA that are involved in tRNA selection in the A site and with the mRNA backbone. Located at the interface of the 30S and 50S subunits, it traverses the body of the 30S subunit contacting proteins on the other side and probably holding the rRNA structure together. The combined cluster of proteins S8, S12 and S17 appears to hold together the shoulder and platform of the 30S subunit. The chain is Small ribosomal subunit protein uS12 from Acinetobacter baylyi (strain ATCC 33305 / BD413 / ADP1).